The chain runs to 45 residues: Myotoxin-3 (45 aa).

3 disulfide bridges follow: cysteine 4–cysteine 36, cysteine 11–cysteine 30, and cysteine 18–cysteine 37.

As to quaternary structure, monomer. In terms of tissue distribution, expressed by the venom gland.

Its subcellular location is the secreted. In terms of biological role, cationic peptide that possesses multiple functions. It acts as a cell-penetrating peptide (CPP), and as a potent voltage-gated potassium channel (Kv) inhibitor. It exhibits antimicrobial activities, hind limb paralysis, and severe muscle necrosis by a non-enzymatic mechanism. The chain is Myotoxin-3 from Crotalus viridis viridis (Prairie rattlesnake).